Consider the following 296-residue polypeptide: Endochitinase 3 (296 aa).

The GH18 domain occupies 12–296 (HKLTVYWGAE…VKNGQLPEED (285 aa)). Residues asparagine 32 and asparagine 152 are each glycosylated (N-linked (GlcNAc...) asparagine). Catalysis depends on glutamate 153, which acts as the Proton donor. N-linked (GlcNAc...) asparagine glycosylation is present at asparagine 228.

It belongs to the glycosyl hydrolase 18 family. Chitinase class III subfamily.

Its subcellular location is the secreted. It catalyses the reaction Random endo-hydrolysis of N-acetyl-beta-D-glucosaminide (1-&gt;4)-beta-linkages in chitin and chitodextrins.. Secreted chitinase involved in the degradation of chitin, a component of the cell walls of fungi and exoskeletal elements of some animals (including worms and arthropods). Participates in the infection process and directly acts in the penetration process of the host cuticle. Involved in heat-shock adaptation. The sequence is that of Endochitinase 3 (chi3) from Metarhizium anisopliae (Entomophthora anisopliae).